An 894-amino-acid chain; its full sequence is DNA mismatch repair protein MutS (894 aa).

ATP is bound at residue 632–639; it reads GPNMGGKS.

The protein belongs to the DNA mismatch repair MutS family.

Functionally, this protein is involved in the repair of mismatches in DNA. It is possible that it carries out the mismatch recognition step. This protein has a weak ATPase activity. This is DNA mismatch repair protein MutS from Paraburkholderia xenovorans (strain LB400).